The sequence spans 308 residues: Heme A synthase (308 aa).

Over 1 to 8 (MFKKRNLK) the chain is Cytoplasmic. Residues 9-29 (WLSILATVIMAWVQLGGALVT) form a helical membrane-spanning segment. The Extracellular segment spans residues 30 to 67 (KTGSENGCGASWPLCHGALLPQNLPIATIIELSHRATS). Cysteine 37 and cysteine 44 are joined by a disulfide. Glutamate 60 is an active-site residue. A heme o-binding site is contributed by histidine 63. Residues 68–88 (ALSLIVVLWLVITAWKNIGYI) form a helical membrane-spanning segment. Residues 89-93 (KEVKP) are Cytoplasmic-facing. Residues 94–114 (LCIISVAFLLIQALVGAAAVL) traverse the membrane as a helical segment. The Extracellular portion of the chain corresponds to 115–123 (WQQNDYVLA). The helical transmembrane segment at 124 to 144 (LHFGISLISFSSVFVLTLIIF) threads the bilayer. Position 125 (histidine 125) interacts with heme o. Residues 145-161 (DVDQKYEANKVHIDRKL) are Cytoplasmic-facing. A helical membrane pass occupies residues 162 to 182 (RIYTWTMAICLYVGIYTGALV). The Extracellular segment spans residues 183–215 (RHTKSSLAYGSWPLPFNDLIPHTEQDWVQLAHR). Residue histidine 214 participates in heme b binding. The chain crosses the membrane as a helical span at residues 216–236 (TLALIASISVFLAFNYAIKHY). Topologically, residues 237 to 244 (QNNRTIRY) are cytoplasmic. Residues 245 to 265 (GYTAALLLIILQIVTGALSIF) form a helical membrane-spanning segment. The Extracellular segment spans residues 266-270 (THVNL). The helical transmembrane segment at 271–291 (IIALLHALIITFEFGLIAYLI) threads the bilayer. Histidine 276 contacts heme b. At 292–308 (VLLLRSQRVEKVKQNAY) the chain is on the cytoplasmic side.

It belongs to the COX15/CtaA family. Type 1 subfamily. Interacts with CtaB. Heme b is required as a cofactor.

It is found in the cell membrane. It carries out the reaction Fe(II)-heme o + 2 A + H2O = Fe(II)-heme a + 2 AH2. The protein operates within porphyrin-containing compound metabolism; heme A biosynthesis; heme A from heme O: step 1/1. Catalyzes the conversion of heme O to heme A by two successive hydroxylations of the methyl group at C8. The first hydroxylation forms heme I, the second hydroxylation results in an unstable dihydroxymethyl group, which spontaneously dehydrates, resulting in the formyl group of heme A. In Staphylococcus carnosus (strain TM300), this protein is Heme A synthase.